Reading from the N-terminus, the 211-residue chain is Adenylate kinase (211 aa).

10-15 is an ATP binding site; that stretch reads GSGKGT. The segment at 30 to 59 is NMP; sequence STGDMLRAEVSKKSPLGLKAEEYMKQGLLV. AMP-binding positions include Thr31, Arg36, 57 to 59, 84 to 87, and Gln91; these read LLV and GFPR. The tract at residues 125–162 is LID; sequence GRRVCPKCGATYNIYYQKPKNDTLCDNDATPLIQRDDD. Arg126 provides a ligand contact to ATP. Zn(2+) contacts are provided by Cys129 and Cys132. 135-136 serves as a coordination point for ATP; that stretch reads TY. Zn(2+)-binding residues include Cys149 and Asp152. Positions 159 and 170 each coordinate AMP. Gly198 contacts ATP.

It belongs to the adenylate kinase family. In terms of assembly, monomer.

It is found in the cytoplasm. It catalyses the reaction AMP + ATP = 2 ADP. The protein operates within purine metabolism; AMP biosynthesis via salvage pathway; AMP from ADP: step 1/1. Its function is as follows. Catalyzes the reversible transfer of the terminal phosphate group between ATP and AMP. Plays an important role in cellular energy homeostasis and in adenine nucleotide metabolism. The sequence is that of Adenylate kinase from Hydrogenobaculum sp. (strain Y04AAS1).